Consider the following 419-residue polypeptide: tRNA(Ile)-lysidine synthase (419 aa).

25 to 30 (SGGIDS) serves as a coordination point for ATP.

Belongs to the tRNA(Ile)-lysidine synthase family.

It localises to the cytoplasm. It carries out the reaction cytidine(34) in tRNA(Ile2) + L-lysine + ATP = lysidine(34) in tRNA(Ile2) + AMP + diphosphate + H(+). Its function is as follows. Ligates lysine onto the cytidine present at position 34 of the AUA codon-specific tRNA(Ile) that contains the anticodon CAU, in an ATP-dependent manner. Cytidine is converted to lysidine, thus changing the amino acid specificity of the tRNA from methionine to isoleucine. This chain is tRNA(Ile)-lysidine synthase, found in Actinobacillus pleuropneumoniae serotype 7 (strain AP76).